We begin with the raw amino-acid sequence, 106 residues long: Large ribosomal subunit protein uL24 (106 aa).

The protein belongs to the universal ribosomal protein uL24 family. Part of the 50S ribosomal subunit.

Its function is as follows. One of two assembly initiator proteins, it binds directly to the 5'-end of the 23S rRNA, where it nucleates assembly of the 50S subunit. In terms of biological role, one of the proteins that surrounds the polypeptide exit tunnel on the outside of the subunit. The sequence is that of Large ribosomal subunit protein uL24 from Bordetella petrii (strain ATCC BAA-461 / DSM 12804 / CCUG 43448).